Here is a 211-residue protein sequence, read N- to C-terminus: MEIKDLGVMPYAEAYALQEQLVRDIAAGSAPETLLLVEHPPVYTLGRSGHMENLLDDSIEVVSINRGGDITYHAPGQLVGYPLLNLGLRGRDLRHYLRFLEEVLIAAAADTGVEGFRREGKTGVWTEQGKLASIGAGARRWVTMHGFALNVCLDLSGFSRIHPCGIVGCTMTSLQQITGQPVSMAQVKARVVYHFQSLLKTWLPLAQVATL.

Positions 28–203 (GSAPETLLLV…HFQSLLKTWL (176 aa)) constitute a BPL/LPL catalytic domain. Residues 66–73 (RGGDITYH), 133–135 (SIG), and 146–148 (GFA) each bind substrate. The Acyl-thioester intermediate role is filled by Cys-164.

The protein belongs to the LipB family.

It is found in the cytoplasm. The enzyme catalyses octanoyl-[ACP] + L-lysyl-[protein] = N(6)-octanoyl-L-lysyl-[protein] + holo-[ACP] + H(+). The protein operates within protein modification; protein lipoylation via endogenous pathway; protein N(6)-(lipoyl)lysine from octanoyl-[acyl-carrier-protein]: step 1/2. In terms of biological role, catalyzes the transfer of endogenously produced octanoic acid from octanoyl-acyl-carrier-protein onto the lipoyl domains of lipoate-dependent enzymes. Lipoyl-ACP can also act as a substrate although octanoyl-ACP is likely to be the physiological substrate. The chain is Octanoyltransferase from Syntrophotalea carbinolica (strain DSM 2380 / NBRC 103641 / GraBd1) (Pelobacter carbinolicus).